A 100-amino-acid chain; its full sequence is Noncompact myelin-associated protein (100 aa).

Over Met1–Gly28 the chain is Extracellular. A helical membrane pass occupies residues Ala29–Leu49. At Lys50–Arg100 the chain is on the cytoplasmic side. A disordered region spans residues Thr58 to Arg100.

In terms of processing, glycosylated. As to expression, found in the peripheral nervous system (PNS) Schwann cells (at protein level). Expressed in the PNS, primarily limited to Schwann cells.

It is found in the cell membrane. Its function is as follows. Plays a role in myelin formation. The sequence is that of Noncompact myelin-associated protein (Ncmap) from Mus musculus (Mouse).